The chain runs to 320 residues: GTP 3',8-cyclase (320 aa).

The 221-residue stretch at 5–225 (QFGRKINYLR…IQLIKKDEKA (221 aa)) folds into the Radical SAM core domain. Residue R14 participates in GTP binding. Residues C21 and C25 each coordinate [4Fe-4S] cluster. Position 27 (Y27) interacts with S-adenosyl-L-methionine. Residue C28 coordinates [4Fe-4S] cluster. R64 contacts GTP. S-adenosyl-L-methionine is bound at residue G68. T95 lines the GTP pocket. S-adenosyl-L-methionine is bound at residue S119. K155 is a GTP binding site. M189 is a binding site for S-adenosyl-L-methionine. C248 and C251 together coordinate [4Fe-4S] cluster. 253–255 (RIR) contacts GTP. C265 is a binding site for [4Fe-4S] cluster.

This sequence belongs to the radical SAM superfamily. MoaA family. As to quaternary structure, monomer and homodimer. It depends on [4Fe-4S] cluster as a cofactor.

The enzyme catalyses GTP + AH2 + S-adenosyl-L-methionine = (8S)-3',8-cyclo-7,8-dihydroguanosine 5'-triphosphate + 5'-deoxyadenosine + L-methionine + A + H(+). The protein operates within cofactor biosynthesis; molybdopterin biosynthesis. Its function is as follows. Catalyzes the cyclization of GTP to (8S)-3',8-cyclo-7,8-dihydroguanosine 5'-triphosphate. The sequence is that of GTP 3',8-cyclase from Campylobacter jejuni (strain RM1221).